The chain runs to 717 residues: F-box only protein 42 (717 aa).

A compositionally biased stretch (acidic residues) spans Met1–Glu30. Residues Met1–Pro34 are disordered. Positions Asn44–Phe93 constitute an F-box domain. Kelch repeat units follow at residues Ser132–Asp184, Leu186–Asp242, Met244–Asp293, and Thr295–His342. The tract at residues Arg361–Tyr474 is disordered. Over residues Pro363–Ser376 the composition is skewed to low complexity. Residues Ser365 and Ser373 each carry the phosphoserine modification. The residue at position 378 (Thr378) is a Phosphothreonine. 2 stretches are compositionally biased toward polar residues: residues Gln416–Gly426 and Ser455–Ser469. Residue Ser552 is modified to Phosphoserine. A compositionally biased stretch (low complexity) spans Gly570–Gly596. Residues Gly570–Val631 are disordered.

Component of some SCF complex, composed of CUL1, SKP1, RBX1 and FBXO42. Interacts (via the kelch domain) with p53/TP53; interaction is direct.

Its function is as follows. Substrate-recognition component of some SCF (SKP1-CUL1-F-box protein)-type E3 ubiquitin ligase complex. Specifically recognizes p53/TP53, promoting its ubiquitination and degradation. This is F-box only protein 42 (FBXO42) from Homo sapiens (Human).